The primary structure comprises 76 residues: Brevinin-2ISa (76 aa).

A signal peptide spans 1 to 22 (MFNMKKSLLLLFFLGTISLSLC). The propeptide at 23–41 (EEERDADEDDGVEMTEEEV) is removed in mature form. The cysteines at positions 70 and 76 are disulfide-linked.

As to expression, expressed by the skin glands.

Its subcellular location is the secreted. Functionally, has antimicrobial activity against Gram-negative bacterium E.coli ATCC 8739 (MIC=50 ug), against Gram positive bacteria S.aureus ATCC 6538 (MIC=12.5 ug), methicillin-resistant S.aureus ATCC 43300 (MIC=100 ug) and B.subtilis ATCC 6633 (MIC=12.5 ug). Has no activity against fungus C.albicans ATCC 90028. This Odorrana ishikawae (Ishikawa's frog) protein is Brevinin-2ISa.